The following is a 167-amino-acid chain: Putative lipoprotein YteS (167 aa).

The N-terminal stretch at 1–20 is a signal peptide; it reads MTKRIRTALCVIVSVLFLAS. A lipid anchor (N-palmitoyl cysteine) is attached at C21. The S-diacylglycerol cysteine moiety is linked to residue C21.

Its subcellular location is the cell membrane. May play a role in the degradation of type I rhamnogalacturonan derived from plant cell walls. This is Putative lipoprotein YteS (yteS) from Bacillus subtilis (strain 168).